Reading from the N-terminus, the 317-residue chain is tRNA dimethylallyltransferase (317 aa).

14–21 (GPTASGKS) provides a ligand contact to ATP. Residue 16 to 21 (TASGKS) participates in substrate binding. Interaction with substrate tRNA regions lie at residues 39 to 42 (DSVL) and 163 to 167 (QRIQR).

This sequence belongs to the IPP transferase family. Monomer. Mg(2+) serves as cofactor.

It catalyses the reaction adenosine(37) in tRNA + dimethylallyl diphosphate = N(6)-dimethylallyladenosine(37) in tRNA + diphosphate. Catalyzes the transfer of a dimethylallyl group onto the adenine at position 37 in tRNAs that read codons beginning with uridine, leading to the formation of N6-(dimethylallyl)adenosine (i(6)A). The sequence is that of tRNA dimethylallyltransferase from Xylella fastidiosa (strain M12).